The following is a 179-amino-acid chain: FADH(2)-dependent resorcinol hydroxylase, reductase component (179 aa).

This sequence belongs to the non-flavoprotein flavin reductase family. The FADH(2)-dependent resorcinol hydroxylase is composed of two subunits, GraA (the oxygenase component) and GraD (the reductase component). Both subunits are required for activity.

The enzyme catalyses FADH2 + NAD(+) = FAD + NADH + 2 H(+). The protein operates within aromatic compound metabolism. Functionally, involved in the gamma-resorcylate (2,6-dihydroxybenzoate) catabolism. Reductase component of the resorcinol hydroxylase, which catalyzes the FADPH-dependent conversion of resorcinol to hydroxyquinol. Catalyzes the reduction of FAD by NADH. The reduced flavin is then transferred to the oxygenase component GraA. The chain is FADH(2)-dependent resorcinol hydroxylase, reductase component from Rhizobium sp. (strain MTP-10005).